An 83-amino-acid chain; its full sequence is MKTLLLTLVVVTIVCLDLGYTMTCYNQQSSEAKTTTTCSGGVSSCYKETWYDGRGTRIERGCGCPRAKKGIERICCGTDKCNN.

Residues Met1–Thr21 form the signal peptide. Intrachain disulfides connect Cys24/Cys45, Cys38/Cys62, Cys64/Cys75, and Cys76/Cys81.

This sequence belongs to the three-finger toxin family. Short-chain subfamily. Type I alpha-neurotoxin sub-subfamily. As to expression, expressed by the venom gland.

The protein localises to the secreted. In terms of biological role, binds to muscle nicotinic acetylcholine receptor (nAChR) and inhibit acetylcholine from binding to the receptor, thereby impairing neuromuscular transmission. This Oxyuranus microlepidotus (Inland taipan) protein is Short neurotoxin 3FTx-Oxy4.